A 587-amino-acid polypeptide reads, in one-letter code: Protein SIX6OS1 (587 aa).

The segment at 356–378 (TPQKQSNSNQWSEKGDKDAEYGD) is disordered. Residues 357–367 (PQKQSNSNQWS) are compositionally biased toward polar residues. Residues 368–378 (EKGDKDAEYGD) are compositionally biased toward basic and acidic residues. The residue at position 439 (Ser-439) is a Phosphoserine. The tract at residues 568-587 (SSSLKGFSSSSQNTTQFTFF) is disordered.

As to quaternary structure, interacts with SYCE1. Interacts with proteasome subunit PSMA8; to participate in meiosis progression during spermatogenesis. Highest expression in retina, skeletal muscle, testis and colon.

It is found in the chromosome. In terms of biological role, meiotic protein that localizes to the central element of the synaptonemal complex and is required for chromosome synapsis during meiotic recombination. Required for the appropriate processing of intermediate recombination nodules before crossover formation. The chain is Protein SIX6OS1 from Homo sapiens (Human).